Here is a 393-residue protein sequence, read N- to C-terminus: MDCNMVSSSQWDWEHLIMSNPSRTEDDSKQLPTEWEIEKGEGIESIVPHFSGLERVSSGSATSFWHTAVSKSSQSTSINSSSPEAKRCKLASESSPGDSCSNIDFVQVKAPTALEVSVASAESDLCLKLGKRTYSEEYWGRNNNEISAVSMKLLTPSVVAGKSKLCGQSMPVPRCQIDGCELDLSSAKGYHRKHKVCEKHSKCPKVSVSGLERRFCQQCSRFHAVSEFDEKKRSCRKRLSHHNARRRKPQGVFSMNPERVYDRRQHTNMLWNGVSLNARSEEMYEWGNNTYDTKPRQTEKSFTLSFQRGNGSEDQLVASSSRMFSTSQTSGGFPAGKSKFQLHGEDVGEYSGVLHESQDIHRALSLLSTSSDPLAQPHVQPFSLLCSYDVVPK.

A disordered region spans residues 74–96; the sequence is QSTSINSSSPEAKRCKLASESSP. The segment at 172–249 adopts an SBP-type zinc-finger fold; that stretch reads VPRCQIDGCE…SHHNARRRKP (78 aa). 8 residues coordinate Zn(2+): C175, C180, C197, H200, C216, C219, H223, and C235. The Bipartite nuclear localization signal signature appears at 232–248; it reads KRSCRKRLSHHNARRRK.

The cofactor is Zn(2+).

It localises to the nucleus. Functionally, trans-acting factor that binds specifically to the consensus nucleotide sequence 5'-TNCGTACAA-3'. The chain is Squamosa promoter-binding-like protein 11 (SPL11) from Arabidopsis thaliana (Mouse-ear cress).